The chain runs to 2894 residues: uncharacterized protein (2894 aa).

A helical transmembrane segment spans residues 8-28; the sequence is ISIFVFTILLLSNVSLGLNVS. 20 PbH1 repeats span residues 543–567, 2085–2107, 2135–2156, 2158–2180, 2201–2223, 2224–2244, 2245–2266, 2267–2289, 2290–2311, 2341–2363, 2367–2389, 2390–2419, 2422–2444, 2455–2477, 2479–2501, 2512–2542, 2550–2582, 2589–2611, 2612–2633, and 2638–2660; these read EVRW…DISL, NYPL…SMLN, FGNI…VLYK, GNGI…YSKN, ISSI…LLEN, SSSS…YLKE, NYIS…EIVN, SSNV…AIFN, GENV…LSYG, LNNL…FIYS, ASNV…YIYG, VNAI…KISG, TKGV…SLEG, VENN…YIGG, VENV…LIQE, GTNI…TVGA, NGYI…EVYG, SLEF…LIGA, SKDI…TIPN, and PYNI…DLDD.

Its subcellular location is the membrane. This is an uncharacterized protein from Methanocaldococcus jannaschii (strain ATCC 43067 / DSM 2661 / JAL-1 / JCM 10045 / NBRC 100440) (Methanococcus jannaschii).